The sequence spans 442 residues: MAHTSDGWGAPYDNQTYVEAYEQLEIALLEPLDRILETANVEEFRPKFKNHQDPNDRKNKKNNDEEWRDSIYNIATDESDTDDHEQRKNFFQPPLQVQRNSFVKNTLMEFKRSSQIDISRLAVMGCGEMSLEKGICEYLGSFGTINVLSVDIDEPSLSIGQQLLGKHLERNAEILAVETGLPVLMRSYVGDILEPDHRFADVDAIVSMEVVEHIPLPNAKKFVENVLGTLMPRIFIFSTPNHEYNAVFGMEPGEFRHGDHKFEMNRKEFSNWLEELSIRFPHYQIDPPHYIGMTRGYENLSGASQAAVCRLQVDLNTTLPQEVTPYEMVGHLPCRLGSRLIAYNLVKEAFLDWLEKIELQEHEPRTDGYSPYWIFNVQNILHHLKAPVSFALTIDEKVAIKYIQGMTSRKVHAEYSHGFNGIVILQMHSKEELIKTVQDNTL.

Gly-125 and Asp-151 together coordinate S-adenosyl-L-methionine. The Mg(2+) site is built by Glu-209, Glu-212, His-213, and His-260.

Belongs to the methyltransferase superfamily. HEN1 family. Mg(2+) is required as a cofactor. In terms of tissue distribution, broadly expressed in the germline and somatic tissues in both hermaphrodites and males.

It localises to the cytoplasm. The protein resides in the nucleus. It is found in the nucleoplasm. The protein localises to the cytoplasmic granule. The catalysed reaction is small RNA 3'-end nucleotide + S-adenosyl-L-methionine = small RNA 3'-end 2'-O-methylnucleotide + S-adenosyl-L-homocysteine + H(+). Methyltransferase that adds a 2'-O-methyl group at the 3'-end of PIWI-interacting RNAs (piRNAs) and small interfering RNAs (siRNAs) which are classes of regulatory RNAs that are involved in gene silencing in endogenous RNA interference (RNAi) pathways. Methylation protects the 3'-end of small RNAs from tailing and trimming and could constitute a recognition signal for appropriate argonaute machineries. Methylates and stabilizes 26G-siRNAs (a class of 26 nucleotide siRNAs that possess a monophosphorylated guanine residue at the 5'-end) when they are bound by argonaute protein ergo-1. This occurs in the female germline and embryo, but not in the male germline. Does not methylate 26G-siRNAs bound by argonaute proteins alg-3 or alg-4. Methylates and stabilizes 21U-piRNAs, which are a class of 21 nucleotide piRNAs that possess a uracil residue at the 5'-end, in the male and female germline. In addition, may play a role in exogenous RNAi (exoRNAi) pathways in the germline. The protein is Small RNA 2'-O-methyltransferase of Caenorhabditis elegans.